The sequence spans 112 residues: 2Fe-2S ferredoxin (112 aa).

In terms of domain architecture, 2Fe-2S ferredoxin-type spans 5-107; sequence IKVTFIVNDG…GIKVRLPSAT (103 aa). The [2Fe-2S] cluster site is built by Cys42, Cys48, Cys51, and Cys88.

It belongs to the adrenodoxin/putidaredoxin family. The cofactor is [2Fe-2S] cluster.

In terms of biological role, ferredoxin are iron-sulfur proteins that transfer electrons in a wide variety of metabolic reactions. The polypeptide is 2Fe-2S ferredoxin (fdxB) (Rickettsia felis (strain ATCC VR-1525 / URRWXCal2) (Rickettsia azadi)).